Reading from the N-terminus, the 73-residue chain is Conotoxin Leo-O2 (73 aa).

The first 22 residues, M1 to A22, serve as a signal peptide directing secretion. A propeptide spanning residues D23–R47 is cleaved from the precursor. 3 disulfides stabilise this stretch: C49–C59, C56–C64, and C58–C69.

The protein belongs to the conotoxin O1 superfamily. Expressed by the venom duct.

It localises to the secreted. The polypeptide is Conotoxin Leo-O2 (Conus leopardus (Leopard cone)).